The following is a 439-amino-acid chain: Ribosomal protein uS12 methylthiotransferase RimO (439 aa).

The MTTase N-terminal domain maps to 4 to 114 (PKVGFVSLGR…VVRAVHGVAP (111 aa)). One can recognise a Radical SAM core domain in the interval 133-370 (LTPRHYAYLK…MEHQQAISTA (238 aa)). [4Fe-4S] cluster contacts are provided by Cys-147, Cys-151, and Cys-154. Residues 373–439 (STRVGREIDV…EYDLWGERIA (67 aa)) form the TRAM domain.

Belongs to the methylthiotransferase family. RimO subfamily. [4Fe-4S] cluster is required as a cofactor.

The protein resides in the cytoplasm. It carries out the reaction L-aspartate(89)-[ribosomal protein uS12]-hydrogen + (sulfur carrier)-SH + AH2 + 2 S-adenosyl-L-methionine = 3-methylsulfanyl-L-aspartate(89)-[ribosomal protein uS12]-hydrogen + (sulfur carrier)-H + 5'-deoxyadenosine + L-methionine + A + S-adenosyl-L-homocysteine + 2 H(+). Functionally, catalyzes the methylthiolation of an aspartic acid residue of ribosomal protein uS12. The chain is Ribosomal protein uS12 methylthiotransferase RimO from Bordetella bronchiseptica (strain ATCC BAA-588 / NCTC 13252 / RB50) (Alcaligenes bronchisepticus).